A 1068-amino-acid polypeptide reads, in one-letter code: Protein AF-10 (1068 aa).

The PHD-type 1 zinc-finger motif lies at 22 to 74; the sequence is IGGCCVCSDERGWAENPLVYCDGHGCSVAVHQACYGIVQVPTGPWFCRKCESQ. A C2HC pre-PHD-type zinc finger spans residues 79–112; sequence RVRCELCPHKDGALKRTDNGGWAHVVCALYIPEV. A self-association region spans residues 80–287; it reads VRCELCPHKD…SLKRLEDTTA (208 aa). The required for interaction with histone H3 stretch occupies residues 106–190; the sequence is ALYIPEVQFA…EGNGADNVQY (85 aa). The segment at 135–198 adopts a PHD-type 2 zinc-finger fold; the sequence is KTCYICDEQG…QYCGYCKYHF (64 aa). Residues 141–233 are interaction with FSTL3; that stretch reads DEQGRESKAA…QDKHHEKEKK (93 aa). Residues 206–260 form a disordered region; the sequence is RGSNRSYDQSLSDSSSHSQDKHHEKEKKKYKEKDKHKQKHKKQPEPSPALVPSLT. A compositionally biased stretch (low complexity) spans 211–222; it reads SYDQSLSDSSSH. At S217 the chain carries Phosphoserine. The span at 223 to 240 shows a compositional bias: basic and acidic residues; it reads SQDKHHEKEKKKYKEKDK. The residue at position 252 (S252) is a Phosphoserine. K280 is covalently cross-linked (Glycyl lysine isopeptide (Lys-Gly) (interchain with G-Cter in SUMO2)). The span at 291-305 shows a compositional bias: polar residues; it reads NANFQEVSAHTSSGK. Residues 291–505 form a disordered region; the sequence is NANFQEVSAH…SSASPTSSVA (215 aa). Positions 306 to 317 are enriched in basic and acidic residues; sequence DVSETRGSEGKG. A DNA-binding region spans residues 311-674; that stretch reads RGSEGKGKKS…QDLGDNSRNL (364 aa). The span at 352 to 372 shows a compositional bias: low complexity; the sequence is SFSGTPGSVKSSSGSSVQSPQ. 2 stretches are compositionally biased toward polar residues: residues 387 to 396 and 404 to 446; these read YSHSQQSSAT and SGSQ…SSLP. Position 436 is a phosphoserine (S436). Basic residues predominate over residues 465-483; it reads EKKRKGNKQSKHGPGRPKG. Residues 490–505 show a composition bias toward low complexity; it reads VSHLSVSSASPTSSVA. S532 carries the post-translational modification Phosphoserine. The segment covering 583 to 594 has biased composition (low complexity); it reads SGSGSSTPVSSS. 2 disordered regions span residues 583–612 and 660–708; these read SGSG…ALSP and NNQT…SLEN. Composition is skewed to polar residues over residues 595 to 604 and 660 to 673; these read HLPQQSSGHL and NNQT…NSRN. Over residues 674-694 the composition is skewed to low complexity; that stretch reads LVGRGSSPRGSLSPRSPVSSL. A phosphoserine mark is found at S684, S686, and S689. A transactivation domain; required for DOT1L-binding region spans residues 703–784; sequence NSSLENLPPV…NAQLSVPFPT (82 aa). Positions 750–778 are leucine-zipper; it reads LQVENRRLEEQIKNLTAKKERLQLLNAQL. Over residues 800 to 814 the composition is skewed to polar residues; the sequence is AQTAPTTDSLNSSKS. Residues 800 to 865 are disordered; that stretch reads AQTAPTTDSL…SPAQQGSGVS (66 aa). 2 stretches are compositionally biased toward low complexity: residues 834-848 and 855-865; these read LTSS…SALS and QSPAQQGSGVS.

In terms of assembly, self-associates. Interacts with FSTL3 isoform 2; the interaction enhances MLLT10 in vitro transcriptional activity and self-association. Interacts with YEATS4. Interacts with SS18. Interacts with DOT1L; this interaction also occurs with the KMT2A/MLL1 fusion protein. Interacts with histone H3; interaction is necessary for MLLT10 binding to nucleosomes; interaction is inhibited by histone H3 'Lys-27' methylations (H3K27me1, H3K27me2 and H3K27me3) amd acetylation; interaction stabilizes association of MLLT10 at chromatin; interaction is essential for histone H3 'Lys-79' dimethylation (H3K79me2). In terms of tissue distribution, expressed abundantly in testis.

Its subcellular location is the nucleus. Probably involved in transcriptional regulation. In vitro or as fusion protein with KMT2A/MLL1 has transactivation activity. Binds to cruciform DNA. In cells, binding to unmodified histone H3 regulates DOT1L functions including histone H3 'Lys-79' dimethylation (H3K79me2) and gene activation. The chain is Protein AF-10 from Homo sapiens (Human).